The following is a 296-amino-acid chain: UDP-N-acetylenolpyruvoylglucosamine reductase (296 aa).

Residues 26 to 191 (RIGGPANYFK…LSATFRLSKS (166 aa)) form the FAD-binding PCMH-type domain. Arg170 is a catalytic residue. The Proton donor role is filled by Cys218. Residue Glu287 is part of the active site.

The protein belongs to the MurB family. FAD serves as cofactor.

It localises to the cytoplasm. It carries out the reaction UDP-N-acetyl-alpha-D-muramate + NADP(+) = UDP-N-acetyl-3-O-(1-carboxyvinyl)-alpha-D-glucosamine + NADPH + H(+). Its pathway is cell wall biogenesis; peptidoglycan biosynthesis. Functionally, cell wall formation. This is UDP-N-acetylenolpyruvoylglucosamine reductase from Chlamydia felis (strain Fe/C-56) (Chlamydophila felis).